Consider the following 1377-residue polypeptide: DNA-directed RNA polymerase subunit beta' (1377 aa).

Zn(2+)-binding residues include Cys60, Cys62, Cys75, and Cys78. Asp449, Asp451, and Asp453 together coordinate Mg(2+). Residues Cys777, Cys851, Cys858, and Cys861 each contribute to the Zn(2+) site.

This sequence belongs to the RNA polymerase beta' chain family. The RNAP catalytic core consists of 2 alpha, 1 beta, 1 beta' and 1 omega subunit. When a sigma factor is associated with the core the holoenzyme is formed, which can initiate transcription. Requires Mg(2+) as cofactor. The cofactor is Zn(2+).

The catalysed reaction is RNA(n) + a ribonucleoside 5'-triphosphate = RNA(n+1) + diphosphate. Its function is as follows. DNA-dependent RNA polymerase catalyzes the transcription of DNA into RNA using the four ribonucleoside triphosphates as substrates. This is DNA-directed RNA polymerase subunit beta' from Borreliella afzelii (strain PKo) (Borrelia afzelii).